Reading from the N-terminus, the 72-residue chain is Large ribosomal subunit protein bL31c (72 aa).

This sequence belongs to the bacterial ribosomal protein bL31 family. Type A subfamily. As to quaternary structure, part of the 50S ribosomal subunit.

The protein resides in the plastid. It localises to the chloroplast. In terms of biological role, binds the 23S rRNA. The protein is Large ribosomal subunit protein bL31c (rpl31) of Thalassiosira pseudonana (Marine diatom).